Reading from the N-terminus, the 556-residue chain is 2-succinyl-5-enolpyruvyl-6-hydroxy-3-cyclohexene-1-carboxylate synthase (556 aa).

Belongs to the TPP enzyme family. MenD subfamily. As to quaternary structure, homodimer. Mg(2+) serves as cofactor. The cofactor is Mn(2+). Requires thiamine diphosphate as cofactor.

It carries out the reaction isochorismate + 2-oxoglutarate + H(+) = 5-enolpyruvoyl-6-hydroxy-2-succinyl-cyclohex-3-ene-1-carboxylate + CO2. The protein operates within quinol/quinone metabolism; 1,4-dihydroxy-2-naphthoate biosynthesis; 1,4-dihydroxy-2-naphthoate from chorismate: step 2/7. It functions in the pathway quinol/quinone metabolism; menaquinone biosynthesis. Its function is as follows. Catalyzes the thiamine diphosphate-dependent decarboxylation of 2-oxoglutarate and the subsequent addition of the resulting succinic semialdehyde-thiamine pyrophosphate anion to isochorismate to yield 2-succinyl-5-enolpyruvyl-6-hydroxy-3-cyclohexene-1-carboxylate (SEPHCHC). The sequence is that of 2-succinyl-5-enolpyruvyl-6-hydroxy-3-cyclohexene-1-carboxylate synthase from Citrobacter koseri (strain ATCC BAA-895 / CDC 4225-83 / SGSC4696).